A 320-amino-acid polypeptide reads, in one-letter code: ATP-dependent 6-phosphofructokinase (320 aa).

G11 contacts ATP. Residue R21–K25 participates in ADP binding. Residues R72–F73 and G102–S105 contribute to the ATP site. D103 contributes to the Mg(2+) binding site. T125–D127 is a substrate binding site. The active-site Proton acceptor is the D127. R154 is a binding site for ADP. Substrate contacts are provided by residues R162 and M169 to R171. ADP is bound by residues G185–D187 and K213–H215. Residues E222, R243, and H249 to R252 contribute to the substrate site.

The protein belongs to the phosphofructokinase type A (PFKA) family. ATP-dependent PFK group I subfamily. Prokaryotic clade 'B1' sub-subfamily. As to quaternary structure, homotetramer. It depends on Mg(2+) as a cofactor.

Its subcellular location is the cytoplasm. It catalyses the reaction beta-D-fructose 6-phosphate + ATP = beta-D-fructose 1,6-bisphosphate + ADP + H(+). It functions in the pathway carbohydrate degradation; glycolysis; D-glyceraldehyde 3-phosphate and glycerone phosphate from D-glucose: step 3/4. Allosterically activated by ADP and other diphosphonucleosides, and allosterically inhibited by phosphoenolpyruvate. Catalyzes the phosphorylation of D-fructose 6-phosphate to fructose 1,6-bisphosphate by ATP, the first committing step of glycolysis. The chain is ATP-dependent 6-phosphofructokinase from Lactobacillus acidophilus (strain ATCC 700396 / NCK56 / N2 / NCFM).